A 432-amino-acid polypeptide reads, in one-letter code: MQLLTIGINHHTAPVALRERVAFPLEQIKPALVTFKNVFLGPHAPNAPEAAILSTCNRTELYCATDDRAAREGAIRWLSEYHRIPVDELAPHVYALPQSEAVRHAFRVASGLDSMVLGETQILGQMKDAVRTATEAGALGTYLNQLFQRTFAVAKEVRGTTEIGAQSVSMAAAAVRLAQRIFETVSDQRVLFIGAGEMIELCATHFAAQSPRELVIANRTAERGQRLAERFNGRAMPLSDLPTRMHEFDIIVSCTASTLPIIGLGAVERAVKARRHRPIFMVDLAVPRDIEPEVGKLKDVFLYTVDDLGAIVREGNASRQAAVAQAETIIETRVQNFMQWLDTRSVVPVIRHMHTQADALRRAEVEKAQKLLARGDDPAAVLEALSQALTNKLIHGPTSALNRVNGADRDSLIDLMRGFYQHAPRSNDQSGH.

Residues 55 to 58 (TCNR), Ser-114, 119 to 121 (ETQ), and Gln-125 contribute to the substrate site. Cys-56 serves as the catalytic Nucleophile. 194–199 (GAGEMI) serves as a coordination point for NADP(+).

This sequence belongs to the glutamyl-tRNA reductase family. Homodimer.

The enzyme catalyses (S)-4-amino-5-oxopentanoate + tRNA(Glu) + NADP(+) = L-glutamyl-tRNA(Glu) + NADPH + H(+). It participates in porphyrin-containing compound metabolism; protoporphyrin-IX biosynthesis; 5-aminolevulinate from L-glutamyl-tRNA(Glu): step 1/2. Its function is as follows. Catalyzes the NADPH-dependent reduction of glutamyl-tRNA(Glu) to glutamate 1-semialdehyde (GSA). The polypeptide is Glutamyl-tRNA reductase (Burkholderia ambifaria (strain MC40-6)).